We begin with the raw amino-acid sequence, 264 residues long: Transmembrane protein 41A (264 aa).

The N-terminal stretch at 1–17 (MHSLLGLLLVFAGSTFA) is a signal peptide. Helical transmembrane passes span 67–87 (VYVF…AIPG), 90–110 (FLNV…LCCV), 153–173 (LFFF…FLNL), 175–195 (APIL…GLIP), and 219–239 (WETA…GTLI). The segment at 96-207 (GALFGPWLGL…FICVQTGSIL (112 aa)) is VTT domain.

This sequence belongs to the TMEM41 family.

It is found in the membrane. The sequence is that of Transmembrane protein 41A (TMEM41A) from Bos taurus (Bovine).